The sequence spans 222 residues: Small ribosomal subunit protein eS1 (222 aa).

This sequence belongs to the eukaryotic ribosomal protein eS1 family.

The chain is Small ribosomal subunit protein eS1 from Pyrobaculum islandicum (strain DSM 4184 / JCM 9189 / GEO3).